Here is a 210-residue protein sequence, read N- to C-terminus: ATP-dependent Clp protease proteolytic subunit (210 aa).

The active-site Nucleophile is Ser-107. Residue His-132 is part of the active site.

Belongs to the peptidase S14 family. Fourteen ClpP subunits assemble into 2 heptameric rings which stack back to back to give a disk-like structure with a central cavity, resembling the structure of eukaryotic proteasomes.

It is found in the cytoplasm. It carries out the reaction Hydrolysis of proteins to small peptides in the presence of ATP and magnesium. alpha-casein is the usual test substrate. In the absence of ATP, only oligopeptides shorter than five residues are hydrolyzed (such as succinyl-Leu-Tyr-|-NHMec, and Leu-Tyr-Leu-|-Tyr-Trp, in which cleavage of the -Tyr-|-Leu- and -Tyr-|-Trp bonds also occurs).. Cleaves peptides in various proteins in a process that requires ATP hydrolysis. Has a chymotrypsin-like activity. Plays a major role in the degradation of misfolded proteins. The chain is ATP-dependent Clp protease proteolytic subunit from Azorhizobium caulinodans (strain ATCC 43989 / DSM 5975 / JCM 20966 / LMG 6465 / NBRC 14845 / NCIMB 13405 / ORS 571).